Reading from the N-terminus, the 636-residue chain is Ligand-gated ion channel 4 (636 aa).

A signal peptide spans Met-1 to Gly-25. At Met-26–Tyr-326 the chain is on the extracellular side. Asn-45, Asn-141, Asn-179, and Asn-227 each carry an N-linked (GlcNAc...) asparagine glycan. An intrachain disulfide couples Cys-240 to Cys-254. Asn-284 carries an N-linked (GlcNAc...) asparagine glycan. Helical transmembrane passes span Val-327–Met-347, Met-357–Pro-377, and Val-383–Val-403. Residues Asn-404–Leu-602 are Cytoplasmic-facing. Residues Leu-603 to Val-623 form a helical membrane-spanning segment.

This sequence belongs to the ligand-gated ion channel (TC 1.A.9) family.

It is found in the postsynaptic cell membrane. It localises to the cell membrane. Its function is as follows. Acetylcholine receptor. In Caenorhabditis briggsae, this protein is Ligand-gated ion channel 4.